Here is a 237-residue protein sequence, read N- to C-terminus: MSQPIYKRILLKLSGEALQGEDGLGIDPAILDRMAVEIKELVEMGVEVGVVLGGGNLFRGAKLAKAGMNRVVGDHMGMLATVMNGLAMRDSLFRADVNAKLMSAFQLNGICDTYNWSEAIKMLREKRVVIFSAGTGNPFFTTDSTACLRGIEIEADVVLKATKVDGVYDCDPAKNPDAKLYKNLAYAEVIDKELQVMDLSAFTLARDHGMPIRVFNMGKPGALRQVVTGTEEGTTIC.

Position 12 to 15 (12 to 15 (KLSG)) interacts with ATP. The tract at residues 20–25 (GEDGLG) is involved in allosteric activation by GTP. Glycine 54 is a binding site for UMP. ATP is bound by residues glycine 55 and arginine 59. UMP contacts are provided by residues aspartate 74 and 135 to 142 (TGNPFFTT). Threonine 162, tyrosine 168, and aspartate 171 together coordinate ATP.

It belongs to the UMP kinase family. Homohexamer.

The protein resides in the cytoplasm. The catalysed reaction is UMP + ATP = UDP + ADP. The protein operates within pyrimidine metabolism; CTP biosynthesis via de novo pathway; UDP from UMP (UMPK route): step 1/1. With respect to regulation, allosterically activated by GTP. Inhibited by UTP. Its function is as follows. Catalyzes the reversible phosphorylation of UMP to UDP. The protein is Uridylate kinase of Haemophilus influenzae (strain PittEE).